We begin with the raw amino-acid sequence, 366 residues long: Aminomethyltransferase (366 aa).

The protein belongs to the GcvT family. The glycine cleavage system is composed of four proteins: P, T, L and H.

The catalysed reaction is N(6)-[(R)-S(8)-aminomethyldihydrolipoyl]-L-lysyl-[protein] + (6S)-5,6,7,8-tetrahydrofolate = N(6)-[(R)-dihydrolipoyl]-L-lysyl-[protein] + (6R)-5,10-methylene-5,6,7,8-tetrahydrofolate + NH4(+). Its function is as follows. The glycine cleavage system catalyzes the degradation of glycine. In Bacillus cytotoxicus (strain DSM 22905 / CIP 110041 / 391-98 / NVH 391-98), this protein is Aminomethyltransferase.